A 74-amino-acid chain; its full sequence is Small ribosomal subunit protein bS18 (74 aa).

The protein belongs to the bacterial ribosomal protein bS18 family. As to quaternary structure, part of the 30S ribosomal subunit. Forms a tight heterodimer with protein bS6.

Functionally, binds as a heterodimer with protein bS6 to the central domain of the 16S rRNA, where it helps stabilize the platform of the 30S subunit. The chain is Small ribosomal subunit protein bS18 from Zymomonas mobilis subsp. mobilis (strain ATCC 31821 / ZM4 / CP4).